The sequence spans 2148 residues: MNHVTIKQSDTRADPFRVFIFGDQSSCNLSNLQLLLFKKSNVYLASFIDQVNLTLRHEVARLTAAERQSFPAFSSVQNLVARALKKDTSVALESTLATIYHLCCFINYFGDGQEAYPTGPTTHVSGLCIGALAAAAVSSSKSLAELVQAGIDAVRVSLKVGLLVARTAALFSHQESNGTSSSPWSYAVPDSQLPLALAEEAIESYQAKTNIPPLSLPYISAKGQNSWTVSGPPAIVQHFLETSQFEKTLRLTPLAVHAPYHAPHIFSAIDVQHIIRAVGPVSSFSSKLAFISSSSSRNLPTGLKFQDLLYRAVEDILILPLDLREAAENIRLVLEATDNVQQCALFPISTGVGPSLKQSFSSAMASRVSIVDCIMERVAADAGPKSTSGPKPSESKIAIIGMSGRFPESADVEAFWDLLHQGLDVHRPVPPDRFNGELYYDVTGKRKNTCKVMHGCWINDPGLFDAKFFNISPKEAEQSDPGQRLALATAYEALEAAGVVADRTPSTQRDRVGVFYGMTSDDYREVSCGQNVDTYFIPGGNRAFTPGKINYFFKYCGPSVSVDTACSSSLAAIHLACNSIWRNECDTAIAGGTNVMSNPDSFVGLDRGYFLSRTGNCHTFDDEADGYCRADAVGTVILKRLEDAIADHDPILGVISGALTNHSADAVSITRPHSGAQEEIFSKLLTESGVHPHQVSYIEMHGTGTQAGDATEMTSVLNCFAPSTSPRRLPHESLHLGSTKANVGHSESASGVSALIKVLLMMEKNIIPPHCGIKGKINHKFPTDLDERNVHIAKTATQWNRRNELNNIRRAFVNNFSAAGGNTALLVEDYPLLIADSSQQDARTAHVVTVSAKSIKSLKGNLENLKKFVQKQASTEGFLPKLSYTTTSRRMHHPFRVAIPAANSEQLLSALDEELKHDSYTCCSESPVAFVFSGQGSQYSSMGQHLLHFTIFRDEVHAYDILAQRHGFPSIMPLIDGSVDIEDLEPLVVQLGTVCVQMALASLWMALGMRPAYVVGHSLGHYAALKVAGVLTASDTIYLVAMRARLLQNKCSRGSHAMLAIRSSVAEIQAHLDEGIYDIACINGPQDTVVSGCIDDIDRLSQKLMDKGIKATRVNVPFAFHSAQVDPILDELEAIASQVEFHAPRVAVGCPLLGKTFKAGETPSLEAKHIRRHCRETVNFLDVLRSAKDDGFVSDKTAWIEIGPHTVCSNLVKANINQDITAVPSLMRNKDGWQVLASSVATLYRHGSSVAWDEYHHDFEACKQVLRLPAYSWDNKLYWIDYVHDWLLTRGDPPVQAAASLPAPPLTFSTASVHRIVHESVEKGKLTLTAECEFTNEQLREVVYGHVVNGNRVCSSSLYTDFGVTLGSYILEKYRPDLQGHAVDVQDMVVNKALVHKEGPTMLLRIDVVLDTTDSKAASMSIYSVNSKGNKTADHAQSSLHFEQPKVWLKSWDSTQYYVERSIEWLKEKADQGLNSRMSSGVIYKLFSSLVDYSTAYKGMQEAIVNTEDFEATALVRFQVDEGNFRCNPMWVDSCGQLAGFLMNGHAKTPKDQVFINHGWQYFRTVRKFSRDKTYRTYVRMRCVEGTTYAGDVYIFDDEGIVGVCGSITFQGIPRKVLNTAMPPPKSQNEAPVRSGPAKPAAKPPRSASSEHSGHFARHANIEPLKLDAALKSATTARNPMLPVFKIVAEEIGIPSASVDNGLVFADYGVDSLLSLSISGRLREELDLDVESSAFETCATLADLAAHLGLDTFSSDQSSGQSSSFGGLSPRSDSIGEITSSVTTPPSLSPRSSVSGSQCKDVCAILAEEIGVSMGEITNDTDLGALGMDSLMSLAVLSRLREELELDLEGDFFVSHPNFSSFKHMFQQGHGDEVGPEPSAELKQYRATSTLLQGSPKSALYTLFLLPDGSGSSFSYAPINAVRKDVCVFGLNCPWLKSAEKLVQFGLKGLATLYVEEIRRRAPHGPYNLGGWSAGGICAYEAAIQFTREGETVERLILLDSPNPIGLEKLPARLFDFVNGLGLFGDGKAPDWLLAHFLAFIDALDEWKPVPWDKALGGNSPPPMTYILWAEDGICKGTDARPEYRDDDPREMKWLLENRTNFGGNNWDVLLGQQSLSIERIQDANHFTMLRKGKNTERVAAFIRSTFG.

The tract at residues 19 to 261 is N-terminal acylcarrier protein transacylase domain (SAT); the sequence is FIFGDQSSCN…TPLAVHAPYH (243 aa). The 436-residue stretch at 394–829 folds into the Ketosynthase family 3 (KS3) domain; the sequence is ESKIAIIGMS…GGNTALLVED (436 aa). Residues C566, H701, and H745 each act as for beta-ketoacyl synthase activity in the active site. The interval 929-1233 is malonyl-CoA:ACP transacylase (MAT) domain; that stretch reads AFVFSGQGSQ…PSLMRNKDGW (305 aa). S1018 functions as the For acyl/malonyl transferase activity in the catalytic mechanism. The product template (PT) domain stretch occupies residues 1310-1624; the sequence is TASVHRIVHE…RKVLNTAMPP (315 aa). The interval 1314-1447 is N-terminal hotdog fold; it reads HRIVHESVEK…SSLHFEQPKV (134 aa). A PKS/mFAS DH domain is found at 1314–1619; it reads HRIVHESVEK…FQGIPRKVLN (306 aa). Residue H1346 is the Proton acceptor; for dehydratase activity of the active site. The tract at residues 1474-1619 is C-terminal hotdog fold; it reads LNSRMSSGVI…FQGIPRKVLN (146 aa). D1533 functions as the Proton donor; for dehydratase activity in the catalytic mechanism. A disordered region spans residues 1619-1655; the sequence is NTAMPPPKSQNEAPVRSGPAKPAAKPPRSASSEHSGH. Low complexity predominate over residues 1634–1650; the sequence is RSGPAKPAAKPPRSASS. Residues 1678–1752 enclose the Carrier 1 domain; that stretch reads RNPMLPVFKI…DLAAHLGLDT (75 aa). Residue S1712 is modified to O-(pantetheine 4'-phosphoryl)serine. 2 stretches are compositionally biased toward low complexity: residues 1757-1769 and 1779-1796; these read QSSG…GGLS and TSSV…SVSG. Residues 1757–1796 form a disordered region; the sequence is QSSGQSSSFGGLSPRSDSIGEITSSVTTPPSLSPRSSVSG. A Carrier 2 domain is found at 1793-1870; the sequence is SVSGSQCKDV…SFKHMFQQGH (78 aa). The residue at position 1830 (S1830) is an O-(pantetheine 4'-phosphoryl)serine. A thioesterase (TE) domain region spans residues 1882–2146; it reads LKQYRATSTL…ERVAAFIRST (265 aa). The For thioesterase activity role is filled by S1973.

Its function is as follows. Polyketide synthase; part of the Pks1 gene cluster that mediates the biosynthesis of an anthraquinone derivative pigment that contributes to conidial pigmentation that provides protection from UV radiation, heat and cold stress. The polyketide synthase Pks1 produces 1-acetyl-2,4,6,8-tetrahydroxy-9,10-anthraquinone though condensation of acetyl-CoA with malonyl-CoA. The dehydratase EthD and the laccase Mlac1 further convert the anthraquinone derivative into the final conidial pigment. This Metarhizium anisopliae (strain ARSEF 549) protein is Polyketide synthase 1.